Consider the following 902-residue polypeptide: HTH-type transcriptional regulator MalT (902 aa).

An ATP-binding site is contributed by 39 to 46 (SPAGYGKT). Residues 832–897 (ELVRTSPLTQ…EAIVTAENLL (66 aa)) enclose the HTH luxR-type domain. Positions 856 to 875 (NEQIAQELDVAGTTIKTHIR) form a DNA-binding region, H-T-H motif.

Belongs to the MalT family. As to quaternary structure, monomer in solution. Oligomerizes to an active state in the presence of the positive effectors ATP and maltotriose.

Its activity is regulated as follows. Activated by ATP and maltotriose, which are both required for DNA binding. In terms of biological role, positively regulates the transcription of the maltose regulon whose gene products are responsible for uptake and catabolism of malto-oligosaccharides. Specifically binds to the promoter region of its target genes, recognizing a short DNA motif called the MalT box. The protein is HTH-type transcriptional regulator MalT of Vibrio campbellii (strain ATCC BAA-1116).